Consider the following 190-residue polypeptide: Peptidyl-tRNA hydrolase (190 aa).

Y14 contacts tRNA. H19 serves as the catalytic Proton acceptor. TRNA contacts are provided by Y64, N66, and N112.

This sequence belongs to the PTH family. In terms of assembly, monomer.

It localises to the cytoplasm. The catalysed reaction is an N-acyl-L-alpha-aminoacyl-tRNA + H2O = an N-acyl-L-amino acid + a tRNA + H(+). Its function is as follows. Hydrolyzes ribosome-free peptidyl-tRNAs (with 1 or more amino acids incorporated), which drop off the ribosome during protein synthesis, or as a result of ribosome stalling. Catalyzes the release of premature peptidyl moieties from peptidyl-tRNA molecules trapped in stalled 50S ribosomal subunits, and thus maintains levels of free tRNAs and 50S ribosomes. This is Peptidyl-tRNA hydrolase from Pelodictyon phaeoclathratiforme (strain DSM 5477 / BU-1).